The primary structure comprises 179 residues: Pectinesterase inhibitor 5 (179 aa).

A signal peptide spans 1 to 25; the sequence is MATMLINHMLFLTSLLIVVFPVANA. 2 disulfides stabilise this stretch: cysteine 35–cysteine 44 and cysteine 101–cysteine 141.

This sequence belongs to the PMEI family. As to expression, expressed in seeds, buds, and mature flowers.

It localises to the secreted. The protein localises to the extracellular space. The protein resides in the apoplast. Functionally, pectin methylesterase (PME) inhibitor that targets PME from seeds and modulates PME activity and pectin methylesterification during seed germination. This Arabidopsis thaliana (Mouse-ear cress) protein is Pectinesterase inhibitor 5.